A 191-amino-acid polypeptide reads, in one-letter code: Fe/S biogenesis protein NfuA (191 aa).

Positions 149 and 152 each coordinate [4Fe-4S] cluster.

The protein belongs to the NfuA family. In terms of assembly, homodimer. It depends on [4Fe-4S] cluster as a cofactor.

Involved in iron-sulfur cluster biogenesis. Binds a 4Fe-4S cluster, can transfer this cluster to apoproteins, and thereby intervenes in the maturation of Fe/S proteins. Could also act as a scaffold/chaperone for damaged Fe/S proteins. The sequence is that of Fe/S biogenesis protein NfuA from Salmonella arizonae (strain ATCC BAA-731 / CDC346-86 / RSK2980).